A 211-amino-acid chain; its full sequence is Flagellar calcium-binding protein (211 aa).

Residues 1 to 29 (MGACGSKGSTSDKGLASDKDGKKAKDRKE) are disordered. The segment covering 15–29 (LASDKDGKKAKDRKE) has biased composition (basic and acidic residues). EF-hand domains follow at residues 45 to 80 (EAKQ…VLKL), 81 to 116 (DEFT…FVEF), 127 to 162 (YDFF…LEAW), and 164 to 199 (AKVE…VKLD). Residues Asp58, Asn60, Thr62, Lys64, and Glu69 each coordinate Ca(2+). Residues Asp140, Ser142, Asn144, Glu151, Asp177, Asn179, Thr181, Ser183, and Glu188 each contribute to the Ca(2+) site.

This sequence belongs to the calflagin family.

Its subcellular location is the cell projection. It is found in the cilium. The protein localises to the flagellum. Functionally, may contribute to the rapid motility of the trypanosomes, playing a role either in flagellar structure or in calcium metabolism. Could alternate between a GDP-bound inactive form to a calcium/GTP-bound active form. The chain is Flagellar calcium-binding protein (FCABP) from Trypanosoma cruzi.